The following is a 444-amino-acid chain: MSWNNRVVWSEGMFLRPQHFQQHDRYLETLVDGRCRSLLAGGWGFSELKLDDALLTQGKLAIVSARGVLPDGTPFNIPADDPAPAPLNVEESLRDGIVYLGLPLKRVGTRDTVEEGEALGGARYVSQVQEVRDDNAAFESRAPVALGSQAFRLLTERDGLGEYAAVGVARVREKRADQALSLDEDYLPPVLDIAAAPPLASFAKELLGLLHQRGEALAGRVVASSAGGASEIADFLLLQLVNRAEALTGHLSRVRPLHPQELYRELVALAGEFCTFTASQRRPEEYPVYNHDDLAASFAPVMLALRQALATVIDAKAIAIPIVEKAYGVHVAMLSDRSLIDNASFVLVVRADVPGESLRGHFPQQAKVGSVEHIRDLVNLQLPGIGLLPMPVAPRQIPYHAGSTYFELDRGSAHWKQLTHSGGFAFHIAGQFPGLNLAFWAIRG.

As to quaternary structure, forms transient higher-order structures that correlated with dynamics of sheath component TssB1. Interacts with TssA1.

In terms of biological role, core component of the H1 type VI (H1-T6SS) secretion system that plays a role in the release of toxins targeting both eukaryotic and prokaryotic species. Functions as a spatio-temporal marker for assembly of contractile apparatus made of TssB1 and TssC1. This role in assembly depends on TssM1. This Pseudomonas aeruginosa (strain ATCC 15692 / DSM 22644 / CIP 104116 / JCM 14847 / LMG 12228 / 1C / PRS 101 / PAO1) protein is Type VI secretion system baseplate component TssK1.